A 389-amino-acid chain; its full sequence is Alanine racemase 1 (389 aa).

Lys-41 acts as the Proton acceptor; specific for D-alanine in catalysis. Position 41 is an N6-(pyridoxal phosphate)lysine (Lys-41). Arg-137 is a substrate binding site. The active-site Proton acceptor; specific for L-alanine is the Tyr-266. Substrate is bound at residue Met-313.

Belongs to the alanine racemase family. The cofactor is pyridoxal 5'-phosphate.

It catalyses the reaction L-alanine = D-alanine. It participates in amino-acid biosynthesis; D-alanine biosynthesis; D-alanine from L-alanine: step 1/1. Functionally, catalyzes the interconversion of L-alanine and D-alanine. May also act on other amino acids. This chain is Alanine racemase 1 (alr1), found in Bacillus subtilis (strain 168).